Reading from the N-terminus, the 289-residue chain is 4-diphosphocytidyl-2-C-methyl-D-erythritol kinase (289 aa).

The active site involves Lys-10. 94-104 provides a ligand contact to ATP; the sequence is PVAAGLAGGSS. Asp-136 is a catalytic residue.

It belongs to the GHMP kinase family. IspE subfamily.

The enzyme catalyses 4-CDP-2-C-methyl-D-erythritol + ATP = 4-CDP-2-C-methyl-D-erythritol 2-phosphate + ADP + H(+). Its pathway is isoprenoid biosynthesis; isopentenyl diphosphate biosynthesis via DXP pathway; isopentenyl diphosphate from 1-deoxy-D-xylulose 5-phosphate: step 3/6. Its function is as follows. Catalyzes the phosphorylation of the position 2 hydroxy group of 4-diphosphocytidyl-2C-methyl-D-erythritol. The sequence is that of 4-diphosphocytidyl-2-C-methyl-D-erythritol kinase from Bacillus cereus (strain G9842).